The sequence spans 2276 residues: Non-reducing polyketide synthase VdtA (2276 aa).

Residues 8-243 form an N-terminal acylcarrier protein transacylase (SAT) domain region; it reads YLFGDQTYDY…KDIPIHAPYH (236 aa). The region spanning 372–804 is the Ketosynthase family 3 (KS3) domain; it reads RAKIAIVGMS…GGNSSVLVED (433 aa). Catalysis depends on for beta-ketoacyl synthase activity residues Cys544, His679, and His723. Residues 905 to 1206 are malonyl-CoA:ACP transacylase (MAT) domain; the sequence is FTFTGQGAQY…KALPTLQRNR (302 aa). Residue Ser996 is the For acyl/malonyl transferase activity of the active site. The segment at 1300 to 1616 is product template (PT) domain; that stretch reads TTTLHRIVDE…PRRVLRYILQ (317 aa). Residues 1304-1438 are N-terminal hotdog fold; that stretch reads HRIVDEKSTE…CRIKFSDRST (135 aa). In terms of domain architecture, PKS/mFAS DH spans 1304–1612; the sequence is HRIVDEKSTE…IQGVPRRVLR (309 aa). The active-site Proton acceptor; for dehydratase activity is the His1336. Positions 1465-1612 are C-terminal hotdog fold; the sequence is TYRFNGPMAY…IQGVPRRVLR (148 aa). The Proton donor; for dehydratase activity role is filled by Asp1525. A Carrier 1 domain is found at 1655–1729; the sequence is SGTLTEALRI…DLKRFFDKIN (75 aa). An O-(pantetheine 4'-phosphoryl)serine modification is found at Ser1689. Residues 1735 to 1762 are disordered; it reads APAPVSDAPKQLQPSSSPVASATPSAPI. Over residues 1748–1761 the composition is skewed to low complexity; sequence PSSSPVASATPSAP. The Carrier 2 domain maps to 1765–1839; the sequence is RSKFESVLNI…DLKAHFMSKN (75 aa). Ser1799 carries the post-translational modification O-(pantetheine 4'-phosphoryl)serine. The segment covering 1840-1854 has biased composition (polar residues); sequence SDNGSSAVLTPQPSR. A disordered region spans residues 1840-1882; sequence SDNGSSAVLTPQPSRDSALPERTRPRVADTSDEEDAPVSANEF. Over residues 1857-1868 the composition is skewed to basic and acidic residues; sequence ALPERTRPRVAD. Residues 1886–1964 form the Carrier 3 domain; it reads ARSTSKYMAV…GLRSFFGFES (79 aa). Ser1923 is modified (O-(pantetheine 4'-phosphoryl)serine). Positions 1967–1993 are disordered; it reads TATNPTASQSSSSISSGTSVFDTSPSP. The span at 1969–1990 shows a compositional bias: low complexity; that stretch reads TNPTASQSSSSISSGTSVFDTS. Positions 2020–2271 are thioesterase (TE) domain; the sequence is PLPPATSVTL…GADHFSLLVS (252 aa).

The protein resides in the cytoplasmic vesicle. It catalyses the reaction 7 malonyl-CoA + acetyl-CoA + 7 H(+) = 7,9,10-trihydroxy-3-(2-oxopropyl)-1H-benzo[g]isochromen-1-one + 7 CO2 + 8 CoA + 2 H2O. The protein operates within secondary metabolite biosynthesis. Non-reducing polyketide synthase; part of the gene cluster that mediates the biosynthesis of viriditoxin, one of the 'classical' secondary metabolites produced by fungi and that has antibacterial activity. The first step is performed by the polyketide synthase VdtA which condenses one acetyl-CoA and 6 malonyl-CoA units to form the heptaketide monomer backbone of viriditoxin. The product of VdtA is then O-methylated on C7 by the O-methyltransferase VdtC. The O-methyl group is important for the stereoselective coupling of the monomers at the final step of viriditoxin biosynthesis. The short-chain dehydrogenase/reductase VdtF then acts as a stereospecific reductase converting the pyrone to dihydropyrone via the reduction of the C3-C4 double bond. The FAD-binding monooxygenase VdtE then converts the ketone group into a methyl-ester group to yield semi-viriditoxin. Finally, the laccase VdtB is involved in dimerization of 2 semi-viriditoxin molecules to yield the final viriditoxin. VdtB is responsible for the regioselective 6,6'-coupling of semi-viriditoxin, which yields (M)-viriditoxin and (P)-viriditoxin at a ratio of 1:2. The non-catalytic carboxylesterase-like protein VdtD affects the stereochemistical outcome of the coupling. The highly reducing polyketide synthase VdtX is not involved in viriditoxin synthesis, but might possibly play a role in the production of additional metabolites not identified yet. This chain is Non-reducing polyketide synthase VdtA, found in Byssochlamys spectabilis (Paecilomyces variotii).